We begin with the raw amino-acid sequence, 234 residues long: MQLITTENKLAGSKKALEIIEKGITTGEVNTLGLATGSTPETLYAELVKSDVDTTNVTTTNLDEYVGLAASDPNSYHYYMNNLLFSKKAFKESFLPNGEATDAEAECARYEEILTEHPIDIQVLGIGTNGHIGFNEPGTSFDSLTHKVVLTDSTREANKRFFEREEDVPTHAYSMGIKSIMNAKKIILLAFGENKAQAIKETIKGPVDVNCPASVLQNHPDVTVILDNEAASLL.

Catalysis depends on aspartate 63, which acts as the Proton acceptor; for enolization step. Asparagine 129 functions as the For ring-opening step in the catalytic mechanism. Histidine 131 serves as the catalytic Proton acceptor; for ring-opening step. The active-site For ring-opening step is glutamate 136.

It belongs to the glucosamine/galactosamine-6-phosphate isomerase family. NagB subfamily.

It carries out the reaction alpha-D-glucosamine 6-phosphate + H2O = beta-D-fructose 6-phosphate + NH4(+). It participates in amino-sugar metabolism; N-acetylneuraminate degradation; D-fructose 6-phosphate from N-acetylneuraminate: step 5/5. In terms of biological role, catalyzes the reversible isomerization-deamination of glucosamine 6-phosphate (GlcN6P) to form fructose 6-phosphate (Fru6P) and ammonium ion. This is Glucosamine-6-phosphate deaminase from Listeria welshimeri serovar 6b (strain ATCC 35897 / DSM 20650 / CCUG 15529 / CIP 8149 / NCTC 11857 / SLCC 5334 / V8).